The primary structure comprises 83 residues: Cell division topological specificity factor (83 aa).

The protein belongs to the MinE family.

Functionally, prevents the cell division inhibition by proteins MinC and MinD at internal division sites while permitting inhibition at polar sites. This ensures cell division at the proper site by restricting the formation of a division septum at the midpoint of the long axis of the cell. This is Cell division topological specificity factor from Bordetella parapertussis (strain 12822 / ATCC BAA-587 / NCTC 13253).